The primary structure comprises 138 residues: Large ribosomal subunit protein bL19 (138 aa).

This sequence belongs to the bacterial ribosomal protein bL19 family.

Its function is as follows. This protein is located at the 30S-50S ribosomal subunit interface and may play a role in the structure and function of the aminoacyl-tRNA binding site. This Rickettsia felis (strain ATCC VR-1525 / URRWXCal2) (Rickettsia azadi) protein is Large ribosomal subunit protein bL19.